A 280-amino-acid chain; its full sequence is Beta-glucosyl-HMC-alpha-glucosyl-transferase (280 aa).

Its pathway is genetic information processing; DNA modification. In terms of biological role, transfers a gentiobiosyl-group on a hydroxymethylcytosine residue in DNA. Is involved in a DNA modification process to protects the phage genome against its own nucleases and the host restriction endonuclease system. In Enterobacteria phage T6 (Bacteriophage T6), this protein is Beta-glucosyl-HMC-alpha-glucosyl-transferase.